Reading from the N-terminus, the 219-residue chain is Non-specific lipid transfer protein GPI-anchored 25 (219 aa).

An N-terminal signal peptide occupies residues 1–22; that stretch reads MATKITGVFILILTITFSSSSA. Intrachain disulfides connect Cys-39–Cys-85, Cys-49–Cys-68, Cys-69–Cys-110, and Cys-83–Cys-123. An N-linked (GlcNAc...) asparagine glycan is attached at Asn-59. A glycan (N-linked (GlcNAc...) asparagine) is linked at Asn-148. The interval 152–181 is disordered; sequence SPQSVDLAPEVSPSSDLFSPETATLAPPPP. A lipid anchor (GPI-anchor amidated serine) is attached at Ser-192. A propeptide spans 193 to 219 (removed in mature form); the sequence is SDSLKIRNFWFPSTIIMTFATSILARI.

Belongs to the plant LTP family.

Its subcellular location is the cell membrane. In terms of biological role, probable lipid transfer protein. The protein is Non-specific lipid transfer protein GPI-anchored 25 of Arabidopsis thaliana (Mouse-ear cress).